Here is a 339-residue protein sequence, read N- to C-terminus: Protein H339R (339 aa).

The protein belongs to the asfivirus H339R family. Interacts with NACA (alpha chain of nascent polypeptide-associated complex).

It localises to the host cytoplasm. Its subcellular location is the host nucleus. The protein resides in the virion. The polypeptide is Protein H339R (Ornithodoros (relapsing fever ticks)).